The primary structure comprises 151 residues: uncharacterized protein (151 aa).

This is an uncharacterized protein from Saccharomyces cerevisiae (strain ATCC 204508 / S288c) (Baker's yeast).